A 445-amino-acid chain; its full sequence is Trigger factor (445 aa).

The region spanning 166-251 (GDVVVVDFVG…AKALKRPVDV (86 aa)) is the PPIase FKBP-type domain.

The protein belongs to the FKBP-type PPIase family. Tig subfamily.

It is found in the cytoplasm. It catalyses the reaction [protein]-peptidylproline (omega=180) = [protein]-peptidylproline (omega=0). Its function is as follows. Involved in protein export. Acts as a chaperone by maintaining the newly synthesized protein in an open conformation. Functions as a peptidyl-prolyl cis-trans isomerase. In Gluconacetobacter diazotrophicus (strain ATCC 49037 / DSM 5601 / CCUG 37298 / CIP 103539 / LMG 7603 / PAl5), this protein is Trigger factor.